Reading from the N-terminus, the 233-residue chain is tRNA (guanine-N(7)-)-methyltransferase (233 aa).

S-adenosyl-L-methionine is bound by residues Glu65, Glu90, Asp117, and Asp139. Asp139 is a catalytic residue. Substrate contacts are provided by residues Lys143, Asp175, and 212–215 (TRYE).

Belongs to the class I-like SAM-binding methyltransferase superfamily. TrmB family.

It carries out the reaction guanosine(46) in tRNA + S-adenosyl-L-methionine = N(7)-methylguanosine(46) in tRNA + S-adenosyl-L-homocysteine. It participates in tRNA modification; N(7)-methylguanine-tRNA biosynthesis. Catalyzes the formation of N(7)-methylguanine at position 46 (m7G46) in tRNA. The polypeptide is tRNA (guanine-N(7)-)-methyltransferase (Roseobacter denitrificans (strain ATCC 33942 / OCh 114) (Erythrobacter sp. (strain OCh 114))).